A 109-amino-acid chain; its full sequence is Somatostatin-2 (109 aa).

The N-terminal stretch at 1–16 (MQFLASLVSFLLVVWS) is a signal peptide. The propeptide occupies 17–80 (VKATALPVED…EPLENKLEER (64 aa)). An intrachain disulfide couples Cys-98 to Cys-109.

The protein belongs to the somatostatin family.

Its subcellular location is the secreted. Its function is as follows. Somatostatin inhibits the release of somatotropin. This chain is Somatostatin-2 (sst2), found in Protopterus annectens (African lungfish).